A 311-amino-acid chain; its full sequence is Methionyl-tRNA formyltransferase (311 aa).

111–114 lines the (6S)-5,6,7,8-tetrahydrofolate pocket; that stretch reads SLLP.

Belongs to the Fmt family.

The enzyme catalyses L-methionyl-tRNA(fMet) + (6R)-10-formyltetrahydrofolate = N-formyl-L-methionyl-tRNA(fMet) + (6S)-5,6,7,8-tetrahydrofolate + H(+). Its function is as follows. Attaches a formyl group to the free amino group of methionyl-tRNA(fMet). The formyl group appears to play a dual role in the initiator identity of N-formylmethionyl-tRNA by promoting its recognition by IF2 and preventing the misappropriation of this tRNA by the elongation apparatus. The protein is Methionyl-tRNA formyltransferase of Caldicellulosiruptor saccharolyticus (strain ATCC 43494 / DSM 8903 / Tp8T 6331).